The sequence spans 140 residues: Putative peptidyl-tRNA hydrolase PTRHD1 (140 aa).

It belongs to the PTH2 family. PTRHD1 subfamily.

The enzyme catalyses an N-acyl-L-alpha-aminoacyl-tRNA + H2O = an N-acyl-L-amino acid + a tRNA + H(+). Functionally, as a putative peptidyl-tRNA hydrolase, it might be involved in releasing tRNAs from the ribosome during protein synthesis. Some evidence, however, suggests that it lacks peptidyl-tRNA hydrolase activity. In Homo sapiens (Human), this protein is Putative peptidyl-tRNA hydrolase PTRHD1 (PTRHD1).